The sequence spans 477 residues: Peroxisome proliferator-activated receptor gamma (477 aa).

Ser87 carries the phosphoserine; by MAPK modification. The nuclear receptor DNA-binding region spans 110-184 (AIECRVCGDK…VGMSHNAIRF (75 aa)). 2 consecutive NR C4-type zinc fingers follow at residues 113 to 133 (CRVCGDKASGFHYGVHACEGC) and 150 to 172 (CDLNCRIHKKSRNKCQFCRFQKC). Residues 231-281 (TKAKAPGHPDGQSHRQNSRGYTRHELADDGGGSDQGAVREPRAEQGGGDSN) are disordered. The NR LBD domain occupies 252–475 (TRHELADDGG…HPLLQEIYKD (224 aa)). Positions 467 to 475 (PLLQEIYKD) match the 9aaTAD motif.

This sequence belongs to the nuclear hormone receptor family. NR1 subfamily. In terms of assembly, heterodimer with the retinoid X receptor. Expressed mainly in adipose tissue and kidney.

The protein localises to the nucleus. It is found in the cytoplasm. Its function is as follows. Receptor that binds peroxisome proliferators such as hypolipidemic drugs and fatty acids. Once activated by a ligand, the receptor binds to a promoter element in the gene for acyl-CoA oxidase and activates its transcription. It therefore controls the peroxisomal beta-oxidation pathway of fatty acids. Key regulator of adipocyte differentiation and glucose homeostasis. May play a role in the regulation of circadian rhythm. This is Peroxisome proliferator-activated receptor gamma (pparg) from Xenopus laevis (African clawed frog).